We begin with the raw amino-acid sequence, 612 residues long: RNA-binding protein MRN1 (612 aa).

Positions 1-28 are enriched in low complexity; that stretch reads MVVSYNNNNNNNNNNNNNNISNNNNNNN. Disordered stretches follow at residues 1-57 and 105-125; these read MVVS…TYAS and PTQF…SQEQ. Composition is skewed to polar residues over residues 42-57 and 115-125; these read YQQS…TYAS and DSQQQRFSQEQ. RRM domains lie at 201–274, 292–379, 431–504, and 522–602; these read RTVY…WGKP, RNVY…KTQQ, RTVY…WGKH, and RNVY…FGKD.

The protein resides in the cytoplasm. RNA-binding protein that binds specific categories of mRNAs, including those that contain upstream open reading frames (uORFs) and internal ribosome entry sites (IRES). Probably involved in translational regulation. The protein is RNA-binding protein MRN1 (MRN1) of Saccharomyces cerevisiae (strain ATCC 204508 / S288c) (Baker's yeast).